We begin with the raw amino-acid sequence, 144 residues long: Protein archease (144 aa).

3 residues coordinate Ca(2+): Asp-14, Asp-143, and Ile-144.

This sequence belongs to the archease family.

Its function is as follows. Activates the tRNA-splicing ligase complex by facilitating the enzymatic turnover of catalytic subunit RtcB. Acts by promoting the guanylylation of RtcB, a key intermediate step in tRNA ligation. Can also alter the NTP specificity of RtcB such that ATP, dGTP or ITP is used efficiently. This chain is Protein archease, found in Aeropyrum pernix (strain ATCC 700893 / DSM 11879 / JCM 9820 / NBRC 100138 / K1).